We begin with the raw amino-acid sequence, 764 residues long: Protein translocase subunit SecA 2 (764 aa).

Residues glutamine 83, 101–105, and aspartate 490 each bind ATP; that span reads GEGKT.

The protein belongs to the SecA family. Monomer and homodimer. Part of the essential Sec protein translocation apparatus which comprises SecA, SecYEG and auxiliary proteins SecDF. Other proteins may also be involved.

It is found in the cell membrane. It localises to the cytoplasm. The catalysed reaction is ATP + H2O + cellular proteinSide 1 = ADP + phosphate + cellular proteinSide 2.. Part of the Sec protein translocase complex. Interacts with the SecYEG preprotein conducting channel. Has a central role in coupling the hydrolysis of ATP to the transfer of proteins into and across the cell membrane, serving as an ATP-driven molecular motor driving the stepwise translocation of polypeptide chains across the membrane. The chain is Protein translocase subunit SecA 2 from Corynebacterium diphtheriae (strain ATCC 700971 / NCTC 13129 / Biotype gravis).